Reading from the N-terminus, the 88-residue chain is Small ribosomal subunit protein uS15 (88 aa).

This sequence belongs to the universal ribosomal protein uS15 family. In terms of assembly, part of the 30S ribosomal subunit. Forms a bridge to the 50S subunit in the 70S ribosome, contacting the 23S rRNA.

Its function is as follows. One of the primary rRNA binding proteins, it binds directly to 16S rRNA where it helps nucleate assembly of the platform of the 30S subunit by binding and bridging several RNA helices of the 16S rRNA. Forms an intersubunit bridge (bridge B4) with the 23S rRNA of the 50S subunit in the ribosome. This Methylacidiphilum infernorum (isolate V4) (Methylokorus infernorum (strain V4)) protein is Small ribosomal subunit protein uS15.